Reading from the N-terminus, the 464-residue chain is ATP synthase subunit beta (464 aa).

Position 154 to 161 (154 to 161 (GGAGVGKT)) interacts with ATP.

This sequence belongs to the ATPase alpha/beta chains family. As to quaternary structure, F-type ATPases have 2 components, CF(1) - the catalytic core - and CF(0) - the membrane proton channel. CF(1) has five subunits: alpha(3), beta(3), gamma(1), delta(1), epsilon(1). CF(0) has three main subunits: a(1), b(2) and c(9-12). The alpha and beta chains form an alternating ring which encloses part of the gamma chain. CF(1) is attached to CF(0) by a central stalk formed by the gamma and epsilon chains, while a peripheral stalk is formed by the delta and b chains.

The protein resides in the cell membrane. It carries out the reaction ATP + H2O + 4 H(+)(in) = ADP + phosphate + 5 H(+)(out). Its function is as follows. Produces ATP from ADP in the presence of a proton gradient across the membrane. The catalytic sites are hosted primarily by the beta subunits. The chain is ATP synthase subunit beta from Mycoplasmopsis synoviae (strain 53) (Mycoplasma synoviae).